A 506-amino-acid polypeptide reads, in one-letter code: Anaerobic nitric oxide reductase transcription regulator NorR (506 aa).

The residue at position 57 (D57) is a 4-aspartylphosphate. One can recognise a Sigma-54 factor interaction domain in the interval 187–416 (MIGLSPAMTQ…LEHAIHRAVV (230 aa)). ATP is bound by residues 215 to 222 (GETGTGKE) and 278 to 287 (ADNGTLFLDE). The segment at residues 481–500 (WAASARALETDVANLHRLAK) is a DNA-binding region (H-T-H motif).

Its pathway is nitrogen metabolism; nitric oxide reduction. In terms of biological role, required for the expression of anaerobic nitric oxide (NO) reductase, acts as a transcriptional activator for at least the norVW operon. Activation also requires sigma-54. The chain is Anaerobic nitric oxide reductase transcription regulator NorR from Salmonella choleraesuis (strain SC-B67).